We begin with the raw amino-acid sequence, 334 residues long: Glycerol-3-phosphate dehydrogenase [NAD(P)+] 2 (334 aa).

Residues Trp16, Arg36, Arg37, and Lys110 each contribute to the NADPH site. Lys110 and Gly140 together coordinate sn-glycerol 3-phosphate. Position 144 (Ala144) interacts with NADPH. Sn-glycerol 3-phosphate is bound by residues Lys195, Asp248, Ser258, Arg259, and Asn260. The Proton acceptor role is filled by Lys195. Arg259 contributes to the NADPH binding site. NADPH-binding residues include Val282 and Glu284.

The protein belongs to the NAD-dependent glycerol-3-phosphate dehydrogenase family.

Its subcellular location is the cytoplasm. It catalyses the reaction sn-glycerol 3-phosphate + NAD(+) = dihydroxyacetone phosphate + NADH + H(+). The enzyme catalyses sn-glycerol 3-phosphate + NADP(+) = dihydroxyacetone phosphate + NADPH + H(+). It participates in membrane lipid metabolism; glycerophospholipid metabolism. Catalyzes the reduction of the glycolytic intermediate dihydroxyacetone phosphate (DHAP) to sn-glycerol 3-phosphate (G3P), the key precursor for phospholipid synthesis. The chain is Glycerol-3-phosphate dehydrogenase [NAD(P)+] 2 from Mycobacterium bovis (strain ATCC BAA-935 / AF2122/97).